Consider the following 694-residue polypeptide: Heat shock protein HSP 90-alpha (694 aa).

A phosphothreonine; by PRKDC mark is found at Thr5 and Thr7. The tract at residues 9 to 236 is interaction with NR3C1; that stretch reads DQPMEEEEVE…DKEVSDDEAK (228 aa). Asn51 lines the ATP pocket. N6-acetyllysine is present on residues Lys58 and Lys84. Asp93, Lys112, and Phe138 together coordinate ATP. A compositionally biased stretch (basic and acidic residues) spans 228–241; sequence KEVSDDEAKQPDDK. Residues 228–275 form a disordered region; it reads KEVSDDEAKQPDDKPEIEDVGSDEEEEEKKDGDIDQEELNKTKPIWTR. 2 positions are modified to phosphoserine: Ser231 and Ser249. The segment covering 242 to 255 has biased composition (acidic residues); that stretch reads PEIEDVGSDEEEEE. Residues 256–268 are compositionally biased toward basic and acidic residues; it reads KKDGDIDQEELNK. Residues 258 to 578 are interaction with NR3C1; the sequence is DGDIDQEELN…TANMERIMKA (321 aa). The interval 261-582 is interaction with FNIP2 and TSC1; that stretch reads IDQEELNKTK…ERIMKAQALR (322 aa). Positions 261 to 694 are interaction with FLCN and FNIP1; that stretch reads IDQEELNKTK…DDTSRMEEVD (434 aa). Tyr289 carries the post-translational modification Phosphotyrosine. Arg376 contacts ATP. Lys419 carries the post-translational modification N6-acetyllysine. Phosphoserine is present on Ser429. N6-acetyllysine is present on Lys434. Residue Ser452 is modified to Phosphoserine. Lys465 carries the post-translational modification N6-acetyllysine. A Phosphotyrosine modification is found at Tyr468. Lys547 carries the N6-acetyllysine modification. Residue Cys560 is modified to S-nitrosocysteine. Residues 590–693 form an interaction with NR1D1 region; it reads MAAKKHLEVN…DDDTSRMEEV (104 aa). Position 603 is a phosphoserine (Ser603). The segment at 644–694 is required for homodimerization; it reads QTHANRIYRMIKLGLGIDEDDPTADDTAAAVTEEMPPLEGDDDTSRMEEVD. A disordered region spans residues 662–694; the sequence is EDDPTADDTAAAVTEEMPPLEGDDDTSRMEEVD. Low complexity predominate over residues 668–677; sequence DDTAAAVTEE. Positions 685 to 694 match the TPR repeat-binding motif; the sequence is DDTSRMEEVD. Residues 690–694 form an essential for interaction with SMYD3, TSC1 and STIP1/HOP region; that stretch reads MEEVD. Positions 691 to 694 are essential for interaction with SGTA and TTC1; it reads EEVD.

Belongs to the heat shock protein 90 family. In terms of assembly, homodimer. Identified in NR3C1/GCR steroid receptor-chaperone complexes formed at least by NR3C1, HSP90AA1 and a variety of proteins containing TPR repeats such as FKBP4, FKBP5, PPID, PPP5C or STIP1. Forms a complex containing HSP90AA1, TSC1 and TSC2; TSC1 is required to recruit TCS2 to the complex. The closed form interacts (via the middle domain and TPR repeat-binding motif) with co-chaperone TSC1 (via C-terminus). Interacts with TOM34. Interacts with TERT; the interaction, together with PTGES3, is required for correct assembly and stabilization of the TERT holoenzyme complex. Interacts with CHORDC1 and DNAJC7. Interacts with STUB1 and UBE2N; may couple the chaperone and ubiquitination systems. Interacts (via TPR repeat-binding motif) with PPP5C (via TPR repeats); the interaction is direct and activates PPP5C phosphatase activity. Following LPS binding, may form a complex with CXCR4, GDF5 and HSPA8. Interacts with KSR1. Interacts with co-chaperone CDC37 (via C-terminus); the interaction inhibits HSP90AA1 ATPase activity. May interact with NWD1. Interacts with FNIP1 and FNIP2; the interaction inhibits HSP90AA1 ATPase activity. Interacts with co-chaperone AHSA1 (phosphorylated on 'Tyr-223'); the interaction activates HSP90AA1 ATPase activity and results in the dissociation of TSC1 from HSP90AA1. Interacts with FLCN in the presence of FNIP1. Interacts with HSP70, STIP1 and PTGES3. Interacts with SMYD3; this interaction enhances SMYD3 histone-lysine N-methyltransferase. Interacts with SGTA (via TPR repeats). Interacts with TTC1 (via TPR repeats). Interacts with HSF1 in an ATP-dependent manner. Interacts with MET; the interaction suppresses MET kinase activity. Interacts with ERBB2 in an ATP-dependent manner; the interaction suppresses ERBB2 kinase activity. Interacts with HIF1A, KEAP1 and RHOBTB2. Interacts with HSF1; this interaction is decreased in a IER5-dependent manner, promoting HSF1 accumulation in the nucleus, homotrimerization and DNA-binding activities. Interacts with STUB1 and SMAD3. Interacts with HSP90AB1; interaction is constitutive. Interacts with HECTD1 (via N-terminus). Interacts with NR3C1 (via domain NR LBD) and NR1D1 (via domain NR LBD). Interacts with NLPR12. Interacts with PDCL3. Interacts with TOMM70; the interaction is required for preprotein mitochondrial import. Interacts with TOMM70, IRF3 and TBK1; the interactions are direct and mediate the association of TOMM70 with IRF3 and TBK1. Forms a complex with ASL, ASS1 and NOS2; the complex regulates cell-autonomous L-arginine synthesis and citrulline recycling while channeling extracellular L-arginine to nitric oxide synthesis pathway. Post-translationally, ISGylated. In terms of processing, S-nitrosylated; negatively regulates the ATPase activity and the activation of eNOS by HSP90AA1. Ubiquitinated via 'Lys-63'-linked polyubiquitination by HECTD1. Ubiquitination promotes translocation into the cytoplasm away from the membrane and secretory pathways.

It localises to the nucleus. The protein resides in the cytoplasm. The protein localises to the melanosome. Its subcellular location is the cell membrane. It is found in the mitochondrion. It carries out the reaction ATP + H2O = ADP + phosphate + H(+). In the resting state, through the dimerization of its C-terminal domain, HSP90 forms a homodimer which is defined as the open conformation. Upon ATP-binding, the N-terminal domain undergoes significant conformational changes and comes in contact to form an active closed conformation. After HSP90 finishes its chaperoning tasks of assisting the proper folding, stabilization and activation of client proteins under the active state, ATP molecule is hydrolyzed to ADP which then dissociates from HSP90 and directs the protein back to the resting state. Co-chaperone TSC1 promotes ATP binding and inhibits HSP90AA1 ATPase activity. Binding to phosphorylated AHSA1 promotes HSP90AA1 ATPase activity. Inhibited by geldanamycin, Ganetespib (STA-9090) and SNX-2112. In terms of biological role, molecular chaperone that promotes the maturation, structural maintenance and proper regulation of specific target proteins involved for instance in cell cycle control and signal transduction. Undergoes a functional cycle that is linked to its ATPase activity which is essential for its chaperone activity. This cycle probably induces conformational changes in the client proteins, thereby causing their activation. Interacts dynamically with various co-chaperones that modulate its substrate recognition, ATPase cycle and chaperone function. Engages with a range of client protein classes via its interaction with various co-chaperone proteins or complexes, that act as adapters, simultaneously able to interact with the specific client and the central chaperone itself. Recruitment of ATP and co-chaperone followed by client protein forms a functional chaperone. After the completion of the chaperoning process, properly folded client protein and co-chaperone leave HSP90 in an ADP-bound partially open conformation and finally, ADP is released from HSP90 which acquires an open conformation for the next cycle. Plays a critical role in mitochondrial import, delivers preproteins to the mitochondrial import receptor TOMM70. Apart from its chaperone activity, it also plays a role in the regulation of the transcription machinery. HSP90 and its co-chaperones modulate transcription at least at three different levels. In the first place, they alter the steady-state levels of certain transcription factors in response to various physiological cues. Second, they modulate the activity of certain epigenetic modifiers, such as histone deacetylases or DNA methyl transferases, and thereby respond to the change in the environment. Third, they participate in the eviction of histones from the promoter region of certain genes and thereby turn on gene expression. Binds bacterial lipopolysaccharide (LPS) and mediates LPS-induced inflammatory response, including TNF secretion by monocytes. Antagonizes STUB1-mediated inhibition of TGF-beta signaling via inhibition of STUB1-mediated SMAD3 ubiquitination and degradation. Mediates the association of TOMM70 with IRF3 or TBK1 in mitochondrial outer membrane which promotes host antiviral response. The protein is Heat shock protein HSP 90-alpha (HSP90AA1) of Oryctolagus cuniculus (Rabbit).